Consider the following 1007-residue polypeptide: Glutamate receptor ionotropic, delta-2 (1007 aa).

A signal peptide spans 1 to 23; it reads MEVFPLLFFLSFWWSRTWDLATS. Residues 24 to 345 form an interaction with CBLN1 homotrimer region; it reads DSIIHIGAIF…NAFHKKLEDR (322 aa). Residues 24–566 are Extracellular-facing; sequence DSIIHIGAIF…DMFACLAPFD (543 aa). Intrachain disulfides connect Cys83-Cys355, Cys99-Cys131, and Cys298-Cys310. N-linked (GlcNAc...) asparagine glycosylation occurs at Asn293. The N-linked (GlcNAc...) asparagine glycan is linked to Asn426. Residues 567 to 587 traverse the membrane as a helical segment; sequence LSLWACIAGTVLLVGLLVYLL. The Cytoplasmic segment spans residues 588 to 635; that stretch reads NWLNPPRLQMGSMTSTTLYNSMWFVYGSFVQQGGEVPYTTLATRMMMG. The chain crosses the membrane as a helical span at residues 636-656; sequence AWWLFALIVISSYTANLAAFL. Topologically, residues 657–830 are extracellular; sequence TITRIESSIQ…QKGGALDIKS (174 aa). N-linked (GlcNAc...) asparagine glycosylation is found at Asn713 and Asn716. The helical transmembrane segment at 831–851 threads the bilayer; that stretch reads LAGVFCILAAGIVLSCLIAVL. Residues 852–1007 are Cytoplasmic-facing; sequence ETWWSRRKGS…GNDPDRGTSI (156 aa). The residue at position 883 (Ser883) is a Phosphoserine. Thr886 is modified (phosphothreonine). At Ser890 the chain carries Phosphoserine. An interaction with AP4M1 region spans residues 921–991; it reads DFRNTHITTT…MSSIPYQPTP (71 aa). A PDZ-binding motif is present at residues 1005-1007; it reads TSI. Residue Ser1006 is modified to Phosphoserine.

This sequence belongs to the glutamate-gated ion channel (TC 1.A.10.1) family. GRID2 subfamily. As to quaternary structure, tetramer; dimer of dimers. Interacts with AP4M1. Interacts with EML2. Interacts with MAGI2 (via PDZ domains). Interacts with BECN1, GOPC, GRID2IP, SHANK1 and SHANK2. Interacts with CBLN2, but not with CBLN4. Interacts with CBLN1 (via C1q domain); the interaction is CBLN1-NRX1 complex formation-dependent; CBLN1-binding is calcium-independent; CBLN1 hexamers anchor GRID2 N-terminal domain dimers to monomeric NRXN1 isoform beta; promotes synaptogenesis and mediates the D-Serine-dependent long term depression signals and AMPA receptor endocytosis. Expressed at high levels in the cerebellar Purkinje cell layer, almost absent in the forebrain.

It is found in the postsynaptic cell membrane. It carries out the reaction Ca(2+)(in) = Ca(2+)(out). The enzyme catalyses Na(+)(in) = Na(+)(out). Functionally, member of the ionotropic glutamate receptor family, which plays a crucial role in synaptic organization and signal transduction in the central nervous system. Although it shares structural features with ionotropic glutamate receptors, does not bind glutamate as a primary ligand. Promotes synaptogenesis and mediates the D-Serine-dependent long term depression signals and AMPA receptor endocytosis of cerebellar parallel fiber-Purkinje cell (PF-PC) synapses through the NRX1B-CBLN1-GRID2 triad complex. In the presence of neurexins and cerebellins, forms cation-selective channels that are proposed to be gated by glycine and D-serine. However, recent research disputes this ligand-gated cation channel activity. Cation-selective ion channel activity can be triggered by GRM1 in Purkinje cells. This Rattus norvegicus (Rat) protein is Glutamate receptor ionotropic, delta-2 (Grid2).